We begin with the raw amino-acid sequence, 298 residues long: Lipoyl synthase (298 aa).

Residues cysteine 40, cysteine 45, cysteine 51, cysteine 67, cysteine 71, cysteine 74, and serine 280 each coordinate [4Fe-4S] cluster. The Radical SAM core domain maps to alanine 53–serine 269.

The protein belongs to the radical SAM superfamily. Lipoyl synthase family. [4Fe-4S] cluster is required as a cofactor.

The protein localises to the cytoplasm. It carries out the reaction [[Fe-S] cluster scaffold protein carrying a second [4Fe-4S](2+) cluster] + N(6)-octanoyl-L-lysyl-[protein] + 2 oxidized [2Fe-2S]-[ferredoxin] + 2 S-adenosyl-L-methionine + 4 H(+) = [[Fe-S] cluster scaffold protein] + N(6)-[(R)-dihydrolipoyl]-L-lysyl-[protein] + 4 Fe(3+) + 2 hydrogen sulfide + 2 5'-deoxyadenosine + 2 L-methionine + 2 reduced [2Fe-2S]-[ferredoxin]. It participates in protein modification; protein lipoylation via endogenous pathway; protein N(6)-(lipoyl)lysine from octanoyl-[acyl-carrier-protein]. Functionally, catalyzes the radical-mediated insertion of two sulfur atoms into the C-6 and C-8 positions of the octanoyl moiety bound to the lipoyl domains of lipoate-dependent enzymes, thereby converting the octanoylated domains into lipoylated derivatives. The chain is Lipoyl synthase from Bacillus mycoides (strain KBAB4) (Bacillus weihenstephanensis).